The primary structure comprises 111 residues: Large ribosomal subunit protein uL22 (111 aa).

The protein belongs to the universal ribosomal protein uL22 family. Part of the 50S ribosomal subunit.

Its function is as follows. This protein binds specifically to 23S rRNA; its binding is stimulated by other ribosomal proteins, e.g. L4, L17, and L20. It is important during the early stages of 50S assembly. It makes multiple contacts with different domains of the 23S rRNA in the assembled 50S subunit and ribosome. The globular domain of the protein is located near the polypeptide exit tunnel on the outside of the subunit, while an extended beta-hairpin is found that lines the wall of the exit tunnel in the center of the 70S ribosome. The chain is Large ribosomal subunit protein uL22 from Xanthomonas euvesicatoria pv. vesicatoria (strain 85-10) (Xanthomonas campestris pv. vesicatoria).